The chain runs to 332 residues: RNA polymerase sigma-B factor (332 aa).

Positions 125 to 138 (DLIQEGALGLERGV) match the Polymerase core binding motif. Positions 294–313 (LVQISQRMGISRERVRQVEK) form a DNA-binding region, H-T-H motif.

Belongs to the sigma-70 factor family.

Functionally, sigma factors are initiation factors that promote the attachment of RNA polymerase to specific initiation sites and are then released. In Nostoc sp. (strain PCC 7120 / SAG 25.82 / UTEX 2576), this protein is RNA polymerase sigma-B factor (sigB).